The chain runs to 306 residues: Nod factor export ATP-binding protein I (306 aa).

In terms of domain architecture, ABC transporter spans isoleucine 8 to tyrosine 238. Glycine 40–serine 47 contacts ATP.

This sequence belongs to the ABC transporter superfamily. Lipooligosaccharide exporter (TC 3.A.1.102) family. In terms of assembly, the complex is composed of two ATP-binding proteins (NodI) and two transmembrane proteins (NodJ).

It is found in the cell inner membrane. Part of the ABC transporter complex NodIJ involved in the export of the nodulation factors (Nod factors), the bacterial signal molecules that induce symbiosis and subsequent nodulation induction. Nod factors are LCO (lipo-chitin oligosaccharide), a modified beta-1,4-linked N-acetylglucosamine oligosaccharide. This subunit is responsible for energy coupling to the transport system. This chain is Nod factor export ATP-binding protein I, found in Bradyrhizobium diazoefficiens (strain JCM 10833 / BCRC 13528 / IAM 13628 / NBRC 14792 / USDA 110).